We begin with the raw amino-acid sequence, 262 residues long: F-actin-capping protein subunit alpha (262 aa).

Belongs to the F-actin-capping protein alpha subunit family. As to quaternary structure, heterodimer of an alpha and a beta subunit.

F-actin-capping proteins bind in a Ca(2+)-independent manner to the fast growing ends of actin filaments (barbed end) thereby blocking the exchange of subunits at these ends. Unlike other capping proteins (such as gelsolin and severin), these proteins do not sever actin filaments. This Kluyveromyces lactis (strain ATCC 8585 / CBS 2359 / DSM 70799 / NBRC 1267 / NRRL Y-1140 / WM37) (Yeast) protein is F-actin-capping protein subunit alpha (CAP1).